The following is a 113-amino-acid chain: Large ribosomal subunit protein bL19 (113 aa).

The protein belongs to the bacterial ribosomal protein bL19 family.

Functionally, this protein is located at the 30S-50S ribosomal subunit interface and may play a role in the structure and function of the aminoacyl-tRNA binding site. The protein is Large ribosomal subunit protein bL19 of Rhodococcus jostii (strain RHA1).